The following is a 638-amino-acid chain: Mediator of RNA polymerase II transcription subunit 17 (638 aa).

Residues 1–21 (MSDSFNLPLRPLTEKRERPDP) form a disordered region.

The protein belongs to the Mediator complex subunit 17 family. In terms of assembly, component of the Mediator complex.

It is found in the nucleus. Its function is as follows. Component of the Mediator complex, a coactivator involved in the regulated transcription of nearly all RNA polymerase II-dependent genes. Mediator functions as a bridge to convey information from gene-specific regulatory proteins to the basal RNA polymerase II transcription machinery. Mediator is recruited to promoters by direct interactions with regulatory proteins and serves as a scaffold for the assembly of a functional preinitiation complex with RNA polymerase II and the general transcription factors. This Aspergillus oryzae (strain ATCC 42149 / RIB 40) (Yellow koji mold) protein is Mediator of RNA polymerase II transcription subunit 17 (srb4).